Reading from the N-terminus, the 318-residue chain is Olfactory receptor 13C7 (318 aa).

The Extracellular portion of the chain corresponds to 1–27 (MVSANQTASVTEFILLGLSAHPKLEKT). The helical transmembrane segment at 28–48 (FFVLILLMYLVILLGNGVLIL) threads the bilayer. The Cytoplasmic portion of the chain corresponds to 49–61 (MTVSNSHLHMPMY). The chain crosses the membrane as a helical span at residues 62–82 (FFLGNLSFLDICYTTSSVPLI). Over 83 to 100 (LDSFLTPRKTISFSACAV) the chain is Extracellular. The chain crosses the membrane as a helical span at residues 101-121 (QMFLSFAMGATECVLLSMMAF). Residues 122–181 (DRYVAICNPLRYPVVMSKAAYMPKAAGSWVAGSTASMVQTSLAMRLPFCGDNIINHFTCE) are Cytoplasmic-facing. The helical transmembrane segment at 182-202 (ILAVLKLACADISVNVISMGV) threads the bilayer. The Extracellular segment spans residues 203-205 (TNV). A helical membrane pass occupies residues 206 to 226 (IFLGVPVLFISFSYVFIIATI). The Cytoplasmic segment spans residues 227–238 (LRIPSAEGRKKA). A helical transmembrane segment spans residues 239-259 (FSTCSAHLTVVVIFYGTILFM). At 260–278 (YGKPKSKDPLGADKQDLAD) the chain is on the extracellular side. Residues 279–289 (KLISLFYGVVT) traverse the membrane as a helical segment. At 290 to 318 (PMLNPIIYSLRNKDVKAAVRDLIFQKCFA) the chain is on the cytoplasmic side.

The protein belongs to the G-protein coupled receptor 1 family.

The protein localises to the cell membrane. Odorant receptor. This is Olfactory receptor 13C7 from Homo sapiens (Human).